Reading from the N-terminus, the 152-residue chain is MFRGVNQLNLDAKGRLAFPSRHRDRLLSHCSGEVVATIDYRDRCLVFYPLPEWEEIERKLIALPDLQPSAKRLKRLLIGHAQELQVDGNGRALVPPPLREYAGLEKRVVLIGQGNKFELWDESLWEQRRADWLQEAAAADAELPGELESLAL.

2 SpoVT-AbrB domains span residues 5–52 and 81–124; these read VNQL…PLPE and AQEL…DESL.

This sequence belongs to the MraZ family. In terms of assembly, forms oligomers.

The protein localises to the cytoplasm. Its subcellular location is the nucleoid. This is Transcriptional regulator MraZ from Halorhodospira halophila (strain DSM 244 / SL1) (Ectothiorhodospira halophila (strain DSM 244 / SL1)).